The sequence spans 267 residues: HTH-type transcriptional activator CsvR (267 aa).

2 DNA-binding regions (H-T-H motif) span residues 183 to 204 and 230 to 253; these read AIIA…ESED and ISQI…NKHF.

Homodimer.

Transcriptional activator of fimbrial genes in enterotoxigenic E.coli. The chain is HTH-type transcriptional activator CsvR from Escherichia coli.